Consider the following 186-residue polypeptide: uncharacterized protein (186 aa).

The next 3 membrane-spanning stretches (helical) occupy residues 42–62 (ISIA…LSVL), 80–100 (LLFL…IGLV), and 131–151 (ICGI…FIVL).

To U.parvum UU008, UU041 and UU042.

It localises to the cell membrane. This is an uncharacterized protein from Ureaplasma parvum serovar 3 (strain ATCC 700970).